We begin with the raw amino-acid sequence, 305 residues long: Homoserine kinase (305 aa).

93–103 (PLARGLGSSAT) is an ATP binding site.

It belongs to the GHMP kinase family. Homoserine kinase subfamily.

Its subcellular location is the cytoplasm. The catalysed reaction is L-homoserine + ATP = O-phospho-L-homoserine + ADP + H(+). The protein operates within amino-acid biosynthesis; L-threonine biosynthesis; L-threonine from L-aspartate: step 4/5. In terms of biological role, catalyzes the ATP-dependent phosphorylation of L-homoserine to L-homoserine phosphate. The sequence is that of Homoserine kinase from Trichodesmium erythraeum (strain IMS101).